We begin with the raw amino-acid sequence, 308 residues long: RING-H2 finger protein ATL63 (308 aa).

The helical transmembrane segment at 29-49 (VLLAALVFLLLVVLFVLLLHF) threads the bilayer. The RING-type; atypical zinc-finger motif lies at 138–180 (CVICLGLWEAGDFGRKLRNCGHGFHVECIDMWLSSHSTCPLCR). The interval 252–308 (VFDDDEEINDGGTRSDRRRSMSMTSSASSSLMRMLSSSSSRSERNKVFPTARQDSSK) is disordered. Residues 272–291 (MSMTSSASSSLMRMLSSSSS) are compositionally biased toward low complexity.

It belongs to the RING-type zinc finger family. ATL subfamily.

The protein localises to the membrane. It catalyses the reaction S-ubiquitinyl-[E2 ubiquitin-conjugating enzyme]-L-cysteine + [acceptor protein]-L-lysine = [E2 ubiquitin-conjugating enzyme]-L-cysteine + N(6)-ubiquitinyl-[acceptor protein]-L-lysine.. It functions in the pathway protein modification; protein ubiquitination. The chain is RING-H2 finger protein ATL63 (ATL63) from Arabidopsis thaliana (Mouse-ear cress).